A 191-amino-acid polypeptide reads, in one-letter code: Probable nicotinate-nucleotide adenylyltransferase (191 aa).

Belongs to the NadD family.

It carries out the reaction nicotinate beta-D-ribonucleotide + ATP + H(+) = deamido-NAD(+) + diphosphate. It functions in the pathway cofactor biosynthesis; NAD(+) biosynthesis; deamido-NAD(+) from nicotinate D-ribonucleotide: step 1/1. Functionally, catalyzes the reversible adenylation of nicotinate mononucleotide (NaMN) to nicotinic acid adenine dinucleotide (NaAD). The protein is Probable nicotinate-nucleotide adenylyltransferase of Oceanobacillus iheyensis (strain DSM 14371 / CIP 107618 / JCM 11309 / KCTC 3954 / HTE831).